We begin with the raw amino-acid sequence, 70 residues long: Large ribosomal subunit protein eL38 (70 aa).

A Glycyl lysine isopeptide (Lys-Gly) (interchain with G-Cter in SUMO2) cross-link involves residue Lys4. The residue at position 9 (Lys9) is an N6-acetyllysine; alternate. Lys9 participates in a covalent cross-link: Glycyl lysine isopeptide (Lys-Gly) (interchain with G-Cter in SUMO2); alternate. At Lys67 the chain carries N6-acetyllysine.

This sequence belongs to the eukaryotic ribosomal protein eL38 family. As to quaternary structure, component of the large ribosomal subunit.

It localises to the cytoplasm. Its function is as follows. Component of the large ribosomal subunit. The ribosome is a large ribonucleoprotein complex responsible for the synthesis of proteins in the cell. The polypeptide is Large ribosomal subunit protein eL38 (Rpl38) (Mus musculus (Mouse)).